Here is an 883-residue protein sequence, read N- to C-terminus: Serine/threonine-protein phosphatase BSL1 homolog (883 aa).

Kelch repeat units follow at residues 64 to 113 (ASSG…AVGT), 221 to 271 (MLLL…VFVG), 273 to 323 (RLHV…DHDA), and 341 to 387 (QIYI…NRNH). 3 disordered regions span residues 381 to 402 (ENQN…STDK), 430 to 466 (SHAS…SLEP), and 499 to 525 (NESR…QRSP). Residues 385–399 (RNHNFNSDSPTTNNS) show a composition bias toward polar residues. Mn(2+)-binding residues include Asp-586, His-588, Asp-620, and Asn-652. The active-site Proton donor is His-653. Residues His-705 and His-784 each contribute to the Mn(2+) site. Residues 861–883 (QRPPTPTRGRPQSASDRNSLAYI) are disordered. A compositionally biased stretch (polar residues) spans 872–883 (QSASDRNSLAYI).

Belongs to the PPP phosphatase family. BSU subfamily. As to quaternary structure, interacts with the phosphorylated form of BSK3. Mn(2+) is required as a cofactor.

The protein resides in the nucleus. The catalysed reaction is O-phospho-L-seryl-[protein] + H2O = L-seryl-[protein] + phosphate. It catalyses the reaction O-phospho-L-threonyl-[protein] + H2O = L-threonyl-[protein] + phosphate. In Oryza sativa subsp. japonica (Rice), this protein is Serine/threonine-protein phosphatase BSL1 homolog (BSL1).